A 604-amino-acid polypeptide reads, in one-letter code: Kelch-like protein 15 (604 aa).

Residues 31–98 (LDVTLVIEDH…MYYGTIELSM (68 aa)) enclose the BTB domain. Residues 133-237 (CAEIMRLLDD…TPSSVFEKVK (105 aa)) form the BACK domain. 5 Kelch repeats span residues 328 to 379 (FVFL…VIGK), 381 to 426 (IYAV…VLNN), 428 to 473 (LFIT…NKSK), 489 to 542 (KLYV…VLDK), and 544 to 590 (IMVL…VCNL).

In terms of assembly, homodimer. Dimerization does not affect PPP2R5B-binding, but is required for its proteasomal degradation. Interacts with CUL3. Directly interacts with PPP2R5B; this interaction leads to PPP2R5B proteasomal degradation. Interacts with RBBP8/CtIP; this interaction leads to RBBP8 proteasomal degradation. Interacts with PACMP micropeptide; interaction prevents ubiquitination and degradation of RBBP8/CtIP.

It localises to the nucleus. It functions in the pathway protein modification; protein ubiquitination. Substrate-specific adapter for CUL3 E3 ubiquitin-protein ligase complex. Acts as an adapter for CUL3 to target the serine/threonine-protein phosphatase 2A (PP2A) subunit PPP2R5B for ubiquitination and subsequent proteasomal degradation, thus promoting exchange with other regulatory subunits and regulating PP2A holoenzyme composition. Acts as an adapter for CUL3 to target the DNA-end resection factor RBBP8/CtIP for ubiquitination and subsequent proteasomal degradation. Through the regulation of RBBP8/CtIP protein turnover, plays a key role in DNA damage response, favoring DNA double-strand repair through error-prone non-homologous end joining (NHEJ) over error-free, RBBP8-mediated homologous recombination (HR). The sequence is that of Kelch-like protein 15 (Klhl15) from Mus musculus (Mouse).